We begin with the raw amino-acid sequence, 509 residues long: ATP synthase subunit alpha (509 aa).

ATP is bound at residue 169–176 (GDRQTGKT).

The protein belongs to the ATPase alpha/beta chains family. F-type ATPases have 2 components, CF(1) - the catalytic core - and CF(0) - the membrane proton channel. CF(1) has five subunits: alpha(3), beta(3), gamma(1), delta(1), epsilon(1). CF(0) has three main subunits: a(1), b(2) and c(9-12). The alpha and beta chains form an alternating ring which encloses part of the gamma chain. CF(1) is attached to CF(0) by a central stalk formed by the gamma and epsilon chains, while a peripheral stalk is formed by the delta and b chains.

It is found in the cell inner membrane. The enzyme catalyses ATP + H2O + 4 H(+)(in) = ADP + phosphate + 5 H(+)(out). Its function is as follows. Produces ATP from ADP in the presence of a proton gradient across the membrane. The alpha chain is a regulatory subunit. This Brucella suis biovar 1 (strain 1330) protein is ATP synthase subunit alpha.